We begin with the raw amino-acid sequence, 358 residues long: 4-diphosphocytidyl-2-C-methyl-D-erythritol kinase (358 aa).

Residue Lys-24 is part of the active site. Position 138-148 (138-148 (PVAGGMAGGSA)) interacts with ATP. Asp-186 is an active-site residue.

It belongs to the GHMP kinase family. IspE subfamily.

It catalyses the reaction 4-CDP-2-C-methyl-D-erythritol + ATP = 4-CDP-2-C-methyl-D-erythritol 2-phosphate + ADP + H(+). Its pathway is isoprenoid biosynthesis; isopentenyl diphosphate biosynthesis via DXP pathway; isopentenyl diphosphate from 1-deoxy-D-xylulose 5-phosphate: step 3/6. In terms of biological role, catalyzes the phosphorylation of the position 2 hydroxy group of 4-diphosphocytidyl-2C-methyl-D-erythritol. The chain is 4-diphosphocytidyl-2-C-methyl-D-erythritol kinase from Corynebacterium jeikeium (strain K411).